The following is a 196-amino-acid chain: Rho-related protein racL (196 aa).

10–17 (GDGAVGKT) lines the GTP pocket. The Effector region motif lies at 32-40 (YQPTVFDNF). Residues 57–61 (DTAGQ) and 116–119 (TQND) each bind GTP. Position 193 is a cysteine methyl ester (Cys-193). Cys-193 carries the S-geranylgeranyl cysteine lipid modification. The propeptide at 194–196 (IIL) is removed in mature form.

The protein belongs to the small GTPase superfamily. Rho family.

It localises to the cell membrane. The chain is Rho-related protein racL (racL) from Dictyostelium discoideum (Social amoeba).